A 1009-amino-acid polypeptide reads, in one-letter code: Regulator of telomere elongation helicase 1 homolog (1009 aa).

The 316-residue stretch at 7 to 322 (AGIPVHFPFE…KEMLLELEKA (316 aa)) folds into the Helicase ATP-binding domain. 42 to 49 (SPTGTGKT) serves as a coordination point for ATP. 4 residues coordinate [4Fe-4S] cluster: cysteine 146, cysteine 164, cysteine 173, and cysteine 209. The DEAH box signature appears at 252–255 (DEAH).

This sequence belongs to the helicase family. RAD3/XPD subfamily.

The protein localises to the nucleus. The enzyme catalyses ATP + H2O = ADP + phosphate + H(+). Its function is as follows. A probable ATP-dependent DNA helicase implicated in DNA repair and the maintenance of genomic stability. Acts as an anti-recombinase to counteract toxic recombination and limit crossover during meiosis. Regulates meiotic recombination and crossover homeostasis by physically dissociating strand invasion events and thereby promotes noncrossover repair by meiotic synthesis dependent strand annealing (SDSA) as well as disassembly of D loop recombination intermediates. The chain is Regulator of telomere elongation helicase 1 homolog from Drosophila persimilis (Fruit fly).